A 308-amino-acid chain; its full sequence is GTPase IMAP family member 5 (308 aa).

Topologically, residues 1-283 are cytoplasmic; the sequence is MEHLQKSTYG…VKSCWSSHTA (283 aa). The AIG1-type G domain maps to 24 to 227; it reads SSCLRILLVG…HSNDLFLHAE (204 aa). GTP is bound by residues 33-41, Ser-54, 151-153, and Asn-188; these read GKSGCGKSA and RKE. The chain crosses the membrane as a helical; Anchor for type IV membrane protein span at residues 284–304; sequence ACALLIVLGLTLLTTFINLCI. Topologically, residues 305–308 are mitochondrial intermembrane; the sequence is SRCK.

It belongs to the TRAFAC class TrmE-Era-EngA-EngB-Septin-like GTPase superfamily. AIG1/Toc34/Toc159-like paraseptin GTPase family. IAN subfamily. As to quaternary structure, interacts with BAD, BAK1, BAX, BCL2, BCL2L1/Bcl-xL and BCL2L11/BimEL. The interaction with BAX is increased, when cells initiate apoptosis upon IL2 withdrawal. Forms a complex with BCL2L1 or MCL1 and HSPA8/HSC70; the interaction between HSPA8 and BCL2L1 or MCL1 is impaired in the absence of GIMAP5. May interact (via N-terminus) with microtubules. As to expression, expressed in thymus (in thymocytes), spleen (in splenocytes), lymph node and lung. Highly expressed in T lymphocytes. Expressed in B cells and in distinct lineages of hematopoietic bone marrow cells, including natural killer, B, T, myeloid and erythroid lineages. Expressed in liver endothelial cells.

It is found in the lysosome. The protein resides in the lysosome membrane. Its subcellular location is the endosome. The protein localises to the multivesicular body membrane. It localises to the endosome membrane. Plays a role in T lymphocyte development and the optimal generation of CD4/CD8 double-positive thymocytes. Inhibitor of GSK3A. May act by sequestering GSK3A in cytoplasmic vesicles and impairing its translocation to the nucleus. Consequently, impairs GSK3A-dependent transcriptional program and regulation of the DNA damage response occurring during T cells proliferation. Required for the survival of bone marrow hematopoietic stem cells, as well as of peripheral T cells, natural killer (NK) and NK T-cell development and the maintenance of normal liver function. May promote the survival of mature T lymphocytes upon cytokine withdrawal. May regulate Ca(2+) homeostasis by modulating lysosomal Ca(2+) stores, preventing its accumulation in the absence of T cell activation. May play a role in mitochondrial DNA segregation in hematopoietic tissues. Is a regulator of liver endothelial cell homeostasis. This Mus musculus (Mouse) protein is GTPase IMAP family member 5 (Gimap5).